The following is a 309-amino-acid chain: 4-hydroxy-3-methylbut-2-enyl diphosphate reductase (309 aa).

C13 is a binding site for [4Fe-4S] cluster. 2 residues coordinate (2E)-4-hydroxy-3-methylbut-2-enyl diphosphate: H42 and H75. Dimethylallyl diphosphate-binding residues include H42 and H75. The isopentenyl diphosphate site is built by H42 and H75. C97 contacts [4Fe-4S] cluster. Residue H125 coordinates (2E)-4-hydroxy-3-methylbut-2-enyl diphosphate. A dimethylallyl diphosphate-binding site is contributed by H125. H125 lines the isopentenyl diphosphate pocket. E127 (proton donor) is an active-site residue. T165 is a binding site for (2E)-4-hydroxy-3-methylbut-2-enyl diphosphate. C195 lines the [4Fe-4S] cluster pocket. (2E)-4-hydroxy-3-methylbut-2-enyl diphosphate-binding residues include S223, S224, N225, and S267. 4 residues coordinate dimethylallyl diphosphate: S223, S224, N225, and S267. Isopentenyl diphosphate-binding residues include S223, S224, N225, and S267.

Belongs to the IspH family. [4Fe-4S] cluster serves as cofactor.

The enzyme catalyses isopentenyl diphosphate + 2 oxidized [2Fe-2S]-[ferredoxin] + H2O = (2E)-4-hydroxy-3-methylbut-2-enyl diphosphate + 2 reduced [2Fe-2S]-[ferredoxin] + 2 H(+). It catalyses the reaction dimethylallyl diphosphate + 2 oxidized [2Fe-2S]-[ferredoxin] + H2O = (2E)-4-hydroxy-3-methylbut-2-enyl diphosphate + 2 reduced [2Fe-2S]-[ferredoxin] + 2 H(+). The protein operates within isoprenoid biosynthesis; dimethylallyl diphosphate biosynthesis; dimethylallyl diphosphate from (2E)-4-hydroxy-3-methylbutenyl diphosphate: step 1/1. It functions in the pathway isoprenoid biosynthesis; isopentenyl diphosphate biosynthesis via DXP pathway; isopentenyl diphosphate from 1-deoxy-D-xylulose 5-phosphate: step 6/6. Functionally, catalyzes the conversion of 1-hydroxy-2-methyl-2-(E)-butenyl 4-diphosphate (HMBPP) into a mixture of isopentenyl diphosphate (IPP) and dimethylallyl diphosphate (DMAPP). Acts in the terminal step of the DOXP/MEP pathway for isoprenoid precursor biosynthesis. This chain is 4-hydroxy-3-methylbut-2-enyl diphosphate reductase, found in Chlamydia abortus (strain DSM 27085 / S26/3) (Chlamydophila abortus).